The chain runs to 197 residues: Dephospho-CoA kinase (197 aa).

A DPCK domain is found at 2–197 (IIGITGGIAS…SALLLLANPR (196 aa)). 10–15 (ASGKST) contributes to the ATP binding site.

This sequence belongs to the CoaE family.

Its subcellular location is the cytoplasm. The catalysed reaction is 3'-dephospho-CoA + ATP = ADP + CoA + H(+). The protein operates within cofactor biosynthesis; coenzyme A biosynthesis; CoA from (R)-pantothenate: step 5/5. Catalyzes the phosphorylation of the 3'-hydroxyl group of dephosphocoenzyme A to form coenzyme A. This is Dephospho-CoA kinase from Streptococcus pyogenes serotype M1.